The chain runs to 145 residues: Putative phosphatidylglycerol/phosphatidylinositol transfer protein DDB_G0282179 (145 aa).

The first 20 residues, 1–20, serve as a signal peptide directing secretion; the sequence is MIKTILLLLINFMLILIVNG. Asn-134 carries an N-linked (GlcNAc...) asparagine glycan.

Belongs to the NPC2 family. Monomer.

Its function is as follows. Catalyzes the intermembrane transfer of phosphatidylglycerol and phosphatidylinositol. The polypeptide is Putative phosphatidylglycerol/phosphatidylinositol transfer protein DDB_G0282179 (Dictyostelium discoideum (Social amoeba)).